Consider the following 104-residue polypeptide: Phosphoribosyl-ATP pyrophosphatase (104 aa).

This sequence belongs to the PRA-PH family.

The protein resides in the cytoplasm. It carries out the reaction 1-(5-phospho-beta-D-ribosyl)-ATP + H2O = 1-(5-phospho-beta-D-ribosyl)-5'-AMP + diphosphate + H(+). The protein operates within amino-acid biosynthesis; L-histidine biosynthesis; L-histidine from 5-phospho-alpha-D-ribose 1-diphosphate: step 2/9. The sequence is that of Phosphoribosyl-ATP pyrophosphatase from Streptococcus thermophilus (strain ATCC BAA-491 / LMD-9).